A 106-amino-acid polypeptide reads, in one-letter code: Putative membrane protein insertion efficiency factor (106 aa).

Belongs to the UPF0161 family.

Its subcellular location is the cell inner membrane. Could be involved in insertion of integral membrane proteins into the membrane. The polypeptide is Putative membrane protein insertion efficiency factor (Acinetobacter baylyi (strain ATCC 33305 / BD413 / ADP1)).